The sequence spans 201 residues: NADH-quinone oxidoreductase subunit C (201 aa).

It belongs to the complex I 30 kDa subunit family. NDH-1 is composed of 14 different subunits. Subunits NuoB, C, D, E, F, and G constitute the peripheral sector of the complex.

The protein resides in the cell inner membrane. The enzyme catalyses a quinone + NADH + 5 H(+)(in) = a quinol + NAD(+) + 4 H(+)(out). NDH-1 shuttles electrons from NADH, via FMN and iron-sulfur (Fe-S) centers, to quinones in the respiratory chain. The immediate electron acceptor for the enzyme in this species is believed to be ubiquinone. Couples the redox reaction to proton translocation (for every two electrons transferred, four hydrogen ions are translocated across the cytoplasmic membrane), and thus conserves the redox energy in a proton gradient. The protein is NADH-quinone oxidoreductase subunit C of Aromatoleum aromaticum (strain DSM 19018 / LMG 30748 / EbN1) (Azoarcus sp. (strain EbN1)).